Consider the following 187-residue polypeptide: UPF0200 protein PYRAB09750 (187 aa).

Position 7–14 (7–14 (GMPGSGKG)) interacts with ATP.

Belongs to the UPF0200 family.

This chain is UPF0200 protein PYRAB09750, found in Pyrococcus abyssi (strain GE5 / Orsay).